Consider the following 192-residue polypeptide: MKIDSATFYKSCSELKGLPVSSLPEIVFVGRSNVGKSTLLNTLTGRKALAKTSSTPGKTQLINYFTINDRLYFVDLPGYGYAKVAKGQRYEWGRLLGGYISEREEISLVVLLIDSRHPDMESDQQMIEFLEYYQRPYGIVLTKYDKLKQKEKSRVRKALKSFSLKTKFIVNYSALSGEGKESLLEQLENYTG.

Residues 22–192 (SLPEIVFVGR…LLEQLENYTG (171 aa)) enclose the EngB-type G domain. GTP contacts are provided by residues 30 to 37 (GRSNVGKS), 57 to 61 (GKTQL), 75 to 78 (DLPG), 142 to 145 (TKYD), and 172 to 174 (YSA). Residues Ser37 and Thr59 each coordinate Mg(2+).

The protein belongs to the TRAFAC class TrmE-Era-EngA-EngB-Septin-like GTPase superfamily. EngB GTPase family. Mg(2+) serves as cofactor.

Its function is as follows. Necessary for normal cell division and for the maintenance of normal septation. The protein is Probable GTP-binding protein EngB of Prosthecochloris aestuarii (strain DSM 271 / SK 413).